The chain runs to 305 residues: Hepatitis A virus cellular receptor 1 homolog (305 aa).

The N-terminal stretch at 1–21 (MNQIQVFISGLILLLPGAVDS) is a signal peptide. The 101-residue stretch at 22–122 (YVEVKGVVGH…PGWFNDQKVT (101 aa)) folds into the Ig-like V-type domain. The Extracellular portion of the chain corresponds to 22-237 (YVEVKGVVGH…GKPQKNPTKG (216 aa)). 3 disulfide bridges follow: cysteine 37/cysteine 108, cysteine 49/cysteine 60, and cysteine 55/cysteine 107. The interval 129–185 (PEIPTRPPTRPTTTRPTATGRPTTISTRSTHVPTSIRVSTSTPPTSTHTWTHKPEPT) is disordered. Low complexity-rich tracts occupy residues 139 to 152 (PTTT…RPTT) and 161 to 177 (PTSI…STHT). A glycan (N-linked (GlcNAc...) asparagine) is linked at asparagine 208. Residues 238-258 (FYVGICIAALLLLLLVSTVAI) traverse the membrane as a helical segment. Residues 259–305 (TRYILMKRKSASLSVVAFRVSKIEALQNAAVVHSRAEDNIYIVEDRP) lie on the Cytoplasmic side of the membrane.

The protein belongs to the immunoglobulin superfamily. TIM family. In terms of assembly, interacts with STAM. Interacts with SELPLG. Expressed by stimulated T-cells. Expressed during primary antigen stimulation. Expressed at higher levels on B rather than T-cells, both constitutively and after activation.

The protein localises to the cell membrane. In terms of biological role, phosphatidylserine receptor that plays an important functional role in regulatory B-cells homeostasis including generation, expansion and suppressor functions. As P-selectin/SELPLG ligand, plays a specialized role in activated but not naive T-cell trafficking during inflammatory responses. Controls thereby T-cell accumulation in the inflamed central nervous system (CNS) and the induction of autoimmune disease. Also regulates expression of various anti-inflammatory cytokines and co-inhibitory ligands including IL10. Acts as a regulator of T-cell proliferation. May play a role in kidney injury and repair. The chain is Hepatitis A virus cellular receptor 1 homolog (Havcr1) from Mus musculus (Mouse).